The sequence spans 205 residues: Rho-related GTP-binding protein RhoQ (205 aa).

16-23 (GDGAVGKT) is a binding site for GTP. The Effector region signature appears at 38-46 (YVPTVFDHY). GTP contacts are provided by residues 63-67 (DTAGQ) and 121-124 (TQID). A Cysteine methyl ester modification is found at Cys-202. Cys-202 carries S-farnesyl cysteine lipidation. Positions 203-205 (LIT) are cleaved as a propeptide — removed in mature form.

The protein belongs to the small GTPase superfamily. Rho family. Interacts with CDC42EP4 in a GTP-dependent manner. Interacts with ARHGAP33/TCGAP. Interacts with CDC42EP1, CDC42EP2, CDC42EP3, PARD6A, PARD6G (and probably PARD6B) in a GTP-dependent manner. Part of a quaternary complex containing PARD3, some PARD6 protein (PARD6A, PARD6B or PARD6G) and some atypical PKC protein (PRKCI or PRKCZ). Interacts with EXO70 in a GTP-dependent manner. Interacts with GOPC. In terms of processing, may be post-translationally modified by both palmitoylation and polyisoprenylation.

Its subcellular location is the cytoplasm. It localises to the cell membrane. Its activity is regulated as follows. Regulated by guanine nucleotide exchange factors (GEFs) which promote the exchange of bound GDP for free GTP, GTPase activating proteins (GAPs) which increase the GTP hydrolysis activity, and GDP dissociation inhibitors which inhibit the dissociation of the nucleotide from the GTPase. Its function is as follows. Plasma membrane-associated small GTPase which cycles between an active GTP-bound and an inactive GDP-bound state. In active state binds to a variety of effector proteins to regulate cellular responses. Involved in epithelial cell polarization processes. May play a role in CFTR trafficking to the plasma membrane. Causes the formation of thin, actin-rich surface projections called filopodia. The sequence is that of Rho-related GTP-binding protein RhoQ (RHOQ) from Homo sapiens (Human).